A 345-amino-acid polypeptide reads, in one-letter code: Dihydroorotase (345 aa).

Zn(2+) contacts are provided by His-13 and His-15. Substrate contacts are provided by residues 15–17 (HFR) and Asn-41. 3 residues coordinate Zn(2+): Lys-98, His-135, and His-173. N6-carboxylysine is present on Lys-98. His-135 contacts substrate. Leu-218 is a substrate binding site. Asp-246 serves as a coordination point for Zn(2+). Residue Asp-246 is part of the active site. Substrate-binding residues include His-250 and Ala-262.

Belongs to the metallo-dependent hydrolases superfamily. DHOase family. Class II DHOase subfamily. Homodimer. Requires Zn(2+) as cofactor.

The enzyme catalyses (S)-dihydroorotate + H2O = N-carbamoyl-L-aspartate + H(+). Its pathway is pyrimidine metabolism; UMP biosynthesis via de novo pathway; (S)-dihydroorotate from bicarbonate: step 3/3. In terms of biological role, catalyzes the reversible cyclization of carbamoyl aspartate to dihydroorotate. The chain is Dihydroorotase from Shewanella halifaxensis (strain HAW-EB4).